The primary structure comprises 750 residues: MPPATGGGLAESELRPRRGRCGPQAARAAGRDVAAEAVARSPKRPAWGSRRFEAVGWWALLALVTLLSFATRFHRLDEPPHICWDETHFGKMGSYYINRTFFFDVHPPLGKMLIGLAGYLSGYDGTFLFQKPGDKYEHHSYMGMRGFCAFLGSWLVPFAYLTVLDLSKSLSAALLTAALLTFDTGCLTLSQYILLDPILMFFIMAAMLSMVKYNSCADRPFSAPWWFWLSLTGVSLAGALGVKFVGLFIILQVGLNTIADLWYLFGDLSLSLVTVGKHLTARVLCLIVLPLALYTATFAVHFMVLSKSGPGDGFFSSAFQARLSGNNLHNASIPEHLAYGSVITVKNLRMAIGYLHSHRHLYPEGIGARQQQVTTYLHKDYNNLWIIKKHNTNSDPLDPSFPVEFVRHGDIIRLEHKETSRNLHSHYHEAPMTRKHYQVTGYGINGTGDSNDFWRIEVVNRKFGNRIKVLRSRIRFIHLVTGCVLGSSGKVLPKWGWEQLEVTCTPYLKETLNSIWNVEDHINPKLPNISLDVLQPSFPEILLESHMVMIRGNSGLKPKDNEFTSKPWHWPINYQGLRFSGVNDTDFRVYLLGNPVVWWLNLLSIALYLLSGSIIAVAMQRGARLPAEVAGLSQVLLRGGGQVLLGWTLHYFPFFLMGRVLYFHHYFPAMLFSSMLTGILWDTLLRLCAWGLASWPLARGIHVAGILSLLLGTAYSFYLFHPLAYGMVGPLAQDPQSPMAGLRWLDSWDF.

Residues 1–23 (MPPATGGGLAESELRPRRGRCGP) are disordered. Residue serine 41 is modified to Phosphoserine. Residues 54–74 (AVGWWALLALVTLLSFATRFH) traverse the membrane as a helical segment. Residue asparagine 98 is glycosylated (N-linked (GlcNAc...) asparagine). 5 helical membrane passes run 100–120 (TFFFDVHPPLGKMLIGLAGYL), 146–166 (GFCAFLGSWLVPFAYLTVLDL), 191–211 (QYILLDPILMFFIMAAMLSMV), 231–251 (LTGVSLAGALGVKFVGLFIIL), and 283–303 (VLCLIVLPLALYTATFAVHFM). A glycan (N-linked (GlcNAc...) asparagine) is linked at asparagine 330. 3 MIR domains span residues 334-390 (PEHL…IKKH), 403-459 (VEFV…IEVV), and 464-521 (GNRI…VEDH). The N-linked (GlcNAc...) asparagine glycan is linked to asparagine 445. Residues asparagine 528 and asparagine 583 are each glycosylated (N-linked (GlcNAc...) asparagine). 4 helical membrane-spanning segments follow: residues 596 to 616 (VVWWLNLLSIALYLLSGSIIA), 643 to 663 (VLLGWTLHYFPFFLMGRVLYF), 665 to 685 (HYFPAMLFSSMLTGILWDTLL), and 700 to 720 (GIHVAGILSLLLGTAYSFYLF).

Belongs to the glycosyltransferase 39 family. Interacts with POMT1. N-glycosylated. In terms of tissue distribution, highly expressed in testis; detected at low levels in most tissues.

It localises to the endoplasmic reticulum membrane. It catalyses the reaction a di-trans,poly-cis-dolichyl beta-D-mannosyl phosphate + L-seryl-[protein] = 3-O-(alpha-D-mannosyl)-L-seryl-[protein] + a di-trans,poly-cis-dolichyl phosphate + H(+). The catalysed reaction is a di-trans,poly-cis-dolichyl beta-D-mannosyl phosphate + L-threonyl-[protein] = 3-O-(alpha-D-mannosyl)-L-threonyl-[protein] + a di-trans,poly-cis-dolichyl phosphate + H(+). The protein operates within protein modification; protein glycosylation. With respect to regulation, slightly activated by Mg(2+) and inhibited by both Ca(+) and Mn(2+). EDTA ha no effect on activity in vitro. Functionally, transfers mannosyl residues to the hydroxyl group of serine or threonine residues. Coexpression of both POMT1 and POMT2 is necessary for enzyme activity, expression of either POMT1 or POMT2 alone is insufficient. Essentially dedicated to O-mannosylation of alpha-DAG1 and few other proteins but not of cadherins and protocaherins. The polypeptide is Protein O-mannosyl-transferase 2 (POMT2) (Homo sapiens (Human)).